We begin with the raw amino-acid sequence, 281 residues long: MNKTVIKNKLKQESFVPSKKMGQNFLLSNEIKNKIVNVANISKDDLILEIGPGWGAITELLVQKTDTLVAIELDKRLYAHLKTYIKAPNFHIINNDVLCVDLDKLILDYTNTKKNQKIKVVANLPYAISSKIVLKIIQSKLINDAYIMVQKEMAERIGAKVNTRGYNAFTVLVQLFCKTKILFQVNAKEFHPQPKVQSAVIHLENLHNKVDFDIEQVSKFLRICFLNKRKKLKNNLSNIYDIKLVNEMFIDYNLDMNLRAENIEPKMFLELFNYLNKSNNE.

Asn-24, Leu-26, Gly-51, Glu-72, Asp-96, and Asn-123 together coordinate S-adenosyl-L-methionine.

This sequence belongs to the class I-like SAM-binding methyltransferase superfamily. rRNA adenine N(6)-methyltransferase family. RsmA subfamily.

The protein localises to the cytoplasm. It carries out the reaction adenosine(1518)/adenosine(1519) in 16S rRNA + 4 S-adenosyl-L-methionine = N(6)-dimethyladenosine(1518)/N(6)-dimethyladenosine(1519) in 16S rRNA + 4 S-adenosyl-L-homocysteine + 4 H(+). Its function is as follows. Specifically dimethylates two adjacent adenosines (A1518 and A1519) in the loop of a conserved hairpin near the 3'-end of 16S rRNA in the 30S particle. May play a critical role in biogenesis of 30S subunits. The sequence is that of Ribosomal RNA small subunit methyltransferase A from Ureaplasma urealyticum serovar 10 (strain ATCC 33699 / Western).